A 677-amino-acid chain; its full sequence is Methionine--tRNA ligase (677 aa).

Residues 15 to 25 (PYANGSIHLGH) carry the 'HIGH' region motif. Zn(2+)-binding residues include cysteine 146, cysteine 149, cysteine 159, and cysteine 162. The 'KMSKS' region signature appears at 333–337 (KMSKS). Lysine 336 is a binding site for ATP. One can recognise a tRNA-binding domain in the interval 575-677 (DFAKVDLRVA…AGAKPGHQVK (103 aa)).

The protein belongs to the class-I aminoacyl-tRNA synthetase family. MetG type 1 subfamily. As to quaternary structure, homodimer. It depends on Zn(2+) as a cofactor.

It is found in the cytoplasm. It carries out the reaction tRNA(Met) + L-methionine + ATP = L-methionyl-tRNA(Met) + AMP + diphosphate. Functionally, is required not only for elongation of protein synthesis but also for the initiation of all mRNA translation through initiator tRNA(fMet) aminoacylation. In Escherichia coli O81 (strain ED1a), this protein is Methionine--tRNA ligase.